The sequence spans 289 residues: Delta-sarcoglycan (289 aa).

Topologically, residues 1–37 (MPQEQYSHHRSTMPSSEGPHIYKVGIYGWRKRCLYFF) are cytoplasmic. The chain crosses the membrane as a helical; Signal-anchor for type II membrane protein span at residues 38-56 (VLLLMILILVNLAMTIWIL). The Extracellular segment spans residues 57-289 (KVMNFTIDGM…TCQINTSVCL (233 aa)). N-linked (GlcNAc...) asparagine glycans are attached at residues N60 and N108. 2 cysteine pairs are disulfide-bonded: C263–C288 and C265–C281. N284 is a glycosylation site (N-linked (GlcNAc...) asparagine).

The protein belongs to the sarcoglycan beta/delta/gamma/zeta family. As to quaternary structure, interacts with FLNC. Cross-link to form 2 major subcomplexes: one consisting of SGCB, SGCD and SGCG and the other consisting of SGCB and SGCD. The association between SGCB and SGCG is particularly strong while SGCA is loosely associated with the other sarcoglycans. Interacts with DAG1. Disulfide bonds are present. As to expression, most strongly expressed in skeletal and heart muscle. Also detected in proliferating myoblasts.

Its subcellular location is the cell membrane. It is found in the sarcolemma. It localises to the cytoplasm. The protein localises to the cytoskeleton. Its function is as follows. Component of the sarcoglycan complex, a subcomplex of the dystrophin-glycoprotein complex which forms a link between the F-actin cytoskeleton and the extracellular matrix. This chain is Delta-sarcoglycan (Sgcd), found in Mus musculus (Mouse).